A 330-amino-acid polypeptide reads, in one-letter code: G-protein coupled receptor 3 (330 aa).

Topologically, residues M1–A42 are extracellular. A glycan (N-linked (GlcNAc...) asparagine) is linked at N20. Residues W43–V62 traverse the membrane as a helical segment. Over A63–P74 the chain is Cytoplasmic. Residues M75–A98 form a helical membrane-spanning segment. Residues A99–L110 lie on the Extracellular side of the membrane. The helical transmembrane segment at M111–V132 threads the bilayer. At D133 to T153 the chain is on the cytoplasmic side. The chain crosses the membrane as a helical span at residues Y154–L173. Over A174–L198 the chain is Extracellular. The chain crosses the membrane as a helical span at residues A199–C217. Topologically, residues R218–G245 are cytoplasmic. A helical membrane pass occupies residues I246–A272. The Extracellular segment spans residues D273–L277. Residues Y278 to F299 traverse the membrane as a helical segment. At R300 to V330 the chain is on the cytoplasmic side. A lipid anchor (S-palmitoyl cysteine) is attached at C313. 3 positions are modified to phosphoserine: S324, S326, and S328.

It belongs to the G-protein coupled receptor 1 family. As to expression, expressed in both the forebrain and hindbrain, with the highest level in habenula. Lower level expression in the testis. Expressed in several metabolically active peripheral tissues, although at lower levels than in the central nervous system (CNS).

The protein resides in the cell membrane. In terms of biological role, constitutively active G-protein coupled receptor that maintains high 3'-5'-cyclic adenosine monophosphate (cAMP) levels that a plays a role in serveral processes including meiotic arrest in oocytes or neuronal development via activation of numerous intracellular signaling pathways. Acts as an essential activator of thermogenic adipocytes and drives thermogenesis via its intrinsic G(s)-coupling activity without the requirement of a ligand. Has a potential role in modulating a number of brain functions, including behavioral responses to stress, amyloid-beta peptide generation in neurons. Stimulates neurite outgrowth in cerebellar granular neurons modulated via PKA, ERK, and most strongly PI3K-mediated signaling pathways. This Mus musculus (Mouse) protein is G-protein coupled receptor 3 (Gpr3).